A 128-amino-acid polypeptide reads, in one-letter code: Large-conductance mechanosensitive channel (128 aa).

2 helical membrane-spanning segments follow: residues 11-31 (FALKGNVLDLAVAVVIGAAFG) and 70-90 (GAFIQSIVDFIIIAFAIFIFV).

The protein belongs to the MscL family. As to quaternary structure, homopentamer.

Its subcellular location is the cell membrane. Functionally, channel that opens in response to stretch forces in the membrane lipid bilayer. May participate in the regulation of osmotic pressure changes within the cell. The protein is Large-conductance mechanosensitive channel of Listeria monocytogenes serotype 4a (strain HCC23).